Consider the following 225-residue polypeptide: UPF0758 protein BB3258 (225 aa).

Residues 103-225 enclose the MPN domain; it reads ALANPDLVRR…TVSMAAQGHL (123 aa). 3 residues coordinate Zn(2+): H174, H176, and D187. The JAMM motif motif lies at 174–187; the sequence is HNHPGGTAAASAAD.

It belongs to the UPF0758 family.

The sequence is that of UPF0758 protein BB3258 from Bordetella bronchiseptica (strain ATCC BAA-588 / NCTC 13252 / RB50) (Alcaligenes bronchisepticus).